The following is a 156-amino-acid chain: Small ribosomal subunit protein uS7 (156 aa).

It belongs to the universal ribosomal protein uS7 family. As to quaternary structure, part of the 30S ribosomal subunit. Contacts proteins S9 and S11.

In terms of biological role, one of the primary rRNA binding proteins, it binds directly to 16S rRNA where it nucleates assembly of the head domain of the 30S subunit. Is located at the subunit interface close to the decoding center, probably blocks exit of the E-site tRNA. The chain is Small ribosomal subunit protein uS7 from Ligilactobacillus salivarius (strain UCC118) (Lactobacillus salivarius).